Consider the following 889-residue polypeptide: Alanine--tRNA ligase (889 aa).

Residues histidine 574, histidine 578, cysteine 676, and histidine 680 each contribute to the Zn(2+) site.

It belongs to the class-II aminoacyl-tRNA synthetase family. It depends on Zn(2+) as a cofactor.

It localises to the cytoplasm. The enzyme catalyses tRNA(Ala) + L-alanine + ATP = L-alanyl-tRNA(Ala) + AMP + diphosphate. Its function is as follows. Catalyzes the attachment of alanine to tRNA(Ala) in a two-step reaction: alanine is first activated by ATP to form Ala-AMP and then transferred to the acceptor end of tRNA(Ala). Also edits incorrectly charged Ser-tRNA(Ala) and Gly-tRNA(Ala) via its editing domain. This chain is Alanine--tRNA ligase, found in Thermobifida fusca (strain YX).